The chain runs to 359 residues: Phosphatidylglycerol--prolipoprotein diacylglyceryl transferase (359 aa).

The next 4 helical transmembrane spans lie at 24-44, 58-78, 98-118, and 124-144; these read VALRAYALFIIVGIVVAIVWG, VLDIAIWAVPFGLIGGRLYHV, VWQGGLGIWGAVALGGVGAWI, and GIPLPALGDAVAPAILLAQAI. Arg146 lines the a 1,2-diacyl-sn-glycero-3-phospho-(1'-sn-glycerol) pocket. Helical transmembrane passes span 193 to 213, 222 to 243, and 258 to 278; these read FVVHPTFLYEALWNVLIVLLL, IGHGRLFALYVAGYCAGRFWIE, and VNSFTSALVFVAALVYFFAAT. The segment at 284–359 is disordered; sequence PAELRPADGG…IDSKKDDAND (76 aa). The span at 306–323 shows a compositional bias: basic and acidic residues; the sequence is IAQKEPEKNVEDAGKDEG. The span at 336-349 shows a compositional bias: low complexity; sequence ASTASTGGEAGTKT. The span at 350-359 shows a compositional bias: basic and acidic residues; sequence IDSKKDDAND.

Belongs to the Lgt family.

Its subcellular location is the cell membrane. The catalysed reaction is L-cysteinyl-[prolipoprotein] + a 1,2-diacyl-sn-glycero-3-phospho-(1'-sn-glycerol) = an S-1,2-diacyl-sn-glyceryl-L-cysteinyl-[prolipoprotein] + sn-glycerol 1-phosphate + H(+). It participates in protein modification; lipoprotein biosynthesis (diacylglyceryl transfer). Catalyzes the transfer of the diacylglyceryl group from phosphatidylglycerol to the sulfhydryl group of the N-terminal cysteine of a prolipoprotein, the first step in the formation of mature lipoproteins. The sequence is that of Phosphatidylglycerol--prolipoprotein diacylglyceryl transferase from Rhodococcus jostii (strain RHA1).